Reading from the N-terminus, the 879-residue chain is Prostaglandin F2 receptor negative regulator (879 aa).

Residues 1–25 (MGRLASRPLLLALLSLALCRGRVVR) form the signal peptide. Ig-like C2-type domains lie at 26–129 (VPTA…ATVQ) and 149–268 (PSAR…KAVE). Over 26 to 832 (VPTATLVRVV…MDVLNAFKYP (807 aa)) the chain is Extracellular. Disulfide bonds link Cys-43-Cys-119 and Cys-169-Cys-247. Asn-44 carries an N-linked (GlcNAc...) asparagine glycan. Thr-271 is subject to Phosphothreonine. Ig-like C2-type domains follow at residues 276–394 (PSVL…EAVS), 406–536 (PDYQ…DVFS), 544–662 (ALED…AWSP), and 688–813 (PIFN…AEIH). N-linked (GlcNAc...) asparagine glycans are attached at residues Asn-286, Asn-300, Asn-383, and Asn-413. Cys-299 and Cys-373 are oxidised to a cystine. The short motif at 424–427 (PTEL) is the Endoplasmic reticulum retention signal element. Cys-429 and Cys-515 are joined by a disulfide. N-linked (GlcNAc...) asparagine glycans are attached at residues Asn-525, Asn-600, Asn-618, and Asn-691. A disulfide bond links Cys-571 and Cys-655. The Cell attachment site signature appears at 703–705 (RGD). Cysteines 711 and 793 form a disulfide. The chain crosses the membrane as a helical span at residues 833–853 (LLIGVGLSTVIGLLSCLIGYC). Residues 854-879 (SSHWCCKKEVQETRRERRRLMSMEMD) lie on the Cytoplasmic side of the membrane.

Interacts with CD9 and CD81. Part of a complex composed of CD9, CD81 and IGSF8. Also seems to interact with CD63, CD82 and CD151.

Its subcellular location is the endoplasmic reticulum membrane. It is found in the golgi apparatus. The protein localises to the trans-Golgi network membrane. Its function is as follows. Inhibits the binding of prostaglandin F2-alpha (PGF2-alpha) to its specific FP receptor, by decreasing the receptor number rather than the affinity constant. Functional coupling with the prostaglandin F2-alpha receptor seems to occur. In myoblasts, associates with tetraspanins CD9 and CD81 to prevent myotube fusion during muscle regeneration. The polypeptide is Prostaglandin F2 receptor negative regulator (PTGFRN) (Homo sapiens (Human)).